The chain runs to 695 residues: Pentatricopeptide repeat-containing protein 1, mitochondrial (695 aa).

PPR repeat units follow at residues 133-169 (TQYWYFFQCKRLIKEGKLAEALDLFERQMLKEERLQP), 170-204 (LECNYTVLIGGCGRVGYLKKAFRLFNDMKKRDLEP), 205-243 (SDATYTALFNVCAESPWKDSALQSALKLRQQLQARNFQL), 244-278 (NLKTYHALLKVAAKCADLRLCLDVFKEIIQRGHAV), 279-315 (TEETFCFLLVGCIQDKKTGFRQAMQVWRQMLSLGIKP), and 316-352 (SRHGYNLLLEAARDCGLGDPEVASRLLLTSQEETILL). The segment at 391 to 416 (QKLEGPPALPEARVTSRTQPEVETTA) is disordered. 4 PPR repeats span residues 470 to 485 (EGFLGKMTEHGLQPDI), 517 to 551 (DVTFFNTLIRKKSKLGDLEGAKALLPILAKKGIVP), 552 to 583 (NLRTFCNLAIGCHRPRDGMQLLADMKKSQVSP), and 584 to 618 (NIHIYSTLINAALKKLDYTYLISILKDMRQNSVPV). The interval 672–695 (WQEFQNKPVGDQDTTDKAGGLRDG) is disordered. The segment covering 685 to 695 (TTDKAGGLRDG) has biased composition (basic and acidic residues).

Belongs to the PTCD1 family. As to quaternary structure, associates with mitochondrial leucine tRNAs. Interacts with ELAC2.

The protein resides in the mitochondrion. Its subcellular location is the mitochondrion matrix. Its function is as follows. Mitochondrial protein implicated in negative regulation of leucine tRNA levels, as well as negative regulation of mitochondria-encoded proteins and COX activity. Also affects the 3'-processing of mitochondrial tRNAs. The sequence is that of Pentatricopeptide repeat-containing protein 1, mitochondrial (Ptcd1) from Mus musculus (Mouse).